We begin with the raw amino-acid sequence, 185 residues long: Ribosome-recycling factor (185 aa).

The protein belongs to the RRF family.

The protein resides in the cytoplasm. Responsible for the release of ribosomes from messenger RNA at the termination of protein biosynthesis. May increase the efficiency of translation by recycling ribosomes from one round of translation to another. The chain is Ribosome-recycling factor from Pseudomonas fluorescens (strain ATCC BAA-477 / NRRL B-23932 / Pf-5).